The following is a 384-amino-acid chain: Mannitol-1-phosphate 5-dehydrogenase (384 aa).

NAD(+) is bound at residue 3-14; that stretch reads AVHFGAGNIGRG.

This sequence belongs to the mannitol dehydrogenase family. Monomer.

The catalysed reaction is D-mannitol 1-phosphate + NAD(+) = beta-D-fructose 6-phosphate + NADH + H(+). The chain is Mannitol-1-phosphate 5-dehydrogenase (mtlD) from Enterococcus faecalis (strain ATCC 700802 / V583).